The primary structure comprises 407 residues: MKRTFIMVLDSFGIGASADAKKFGDEGADTLGHIAEACARGEANVGRSGPLTLPNLSRLGLGKAAEESTGTFPVGLDKNADIIGAYGYASELSSGKDTPSGHWEIAGVPVLFDWGYFSDVENSFPQELLDKLVKRANLPGYLGNCHSSGTVILDQLGEEHMKTGKPIFYTSADSVFQIACHEETFGLDRLYELCEIAREELTDGGYNIGRVIARPFIGDKPGHFQRTGNRHDLAVEPPAPTMLKKLVDEKGGEVVSIGKIADIYAQVGITQKVKATGLDALFDATIEEMKKAGDNTIVFTNFVDFDSSYGHRRDVAGYAAALELFDRRLPELMALVKEDDILILTADHGCDPTWPGTDHTREHIPVLVYGPKVKPGSLGHRETFADIGQTVAAYFGLSPMDYGKNML.

D10, D306, H311, D347, H348, and H359 together coordinate Mn(2+).

It belongs to the phosphopentomutase family. Requires Mn(2+) as cofactor.

Its subcellular location is the cytoplasm. The catalysed reaction is 2-deoxy-alpha-D-ribose 1-phosphate = 2-deoxy-D-ribose 5-phosphate. It carries out the reaction alpha-D-ribose 1-phosphate = D-ribose 5-phosphate. It participates in carbohydrate degradation; 2-deoxy-D-ribose 1-phosphate degradation; D-glyceraldehyde 3-phosphate and acetaldehyde from 2-deoxy-alpha-D-ribose 1-phosphate: step 1/2. Isomerase that catalyzes the conversion of deoxy-ribose 1-phosphate (dRib-1-P) and ribose 1-phosphate (Rib-1-P) to deoxy-ribose 5-phosphate (dRib-5-P) and ribose 5-phosphate (Rib-5-P), respectively. In Yersinia pseudotuberculosis serotype O:1b (strain IP 31758), this protein is Phosphopentomutase.